A 194-amino-acid polypeptide reads, in one-letter code: Probable WRKY transcription factor 51 (194 aa).

A disordered region spans residues Ser58–Arg97. Residues Ser76 to His96 show a composition bias toward basic and acidic residues. Residues Ser104–Leu169 constitute a DNA-binding region (WRKY).

The protein belongs to the WRKY group II-c family. In terms of assembly, interacts with CAMBP25/VQ15.

It localises to the nucleus. Transcription factor. Interacts specifically with the W box (5'-(T)TGAC[CT]-3'), a frequently occurring elicitor-responsive cis-acting element. Involved in defense responses. May act as positive regulator of salicylic acid (SA)-mediated signaling and negative regulator of jasmonic acid (JA)-mediated signaling. The sequence is that of Probable WRKY transcription factor 51 (WRKY51) from Arabidopsis thaliana (Mouse-ear cress).